The sequence spans 415 residues: SVF1-like protein YDR222W (415 aa).

This sequence belongs to the SVF1 family.

The protein resides in the cytoplasm. This is SVF1-like protein YDR222W from Saccharomyces cerevisiae (strain ATCC 204508 / S288c) (Baker's yeast).